The chain runs to 359 residues: MTPSVMDRAVLTMAAFGTGMLGAASFVWCFLFRSLFASCVLERAVDELFFWGSLCVQVMMLFFCFRKYSKTLSRYLDLICAVNIVALFGCLICLQYKMGFRTYLPILFSLNLIWLSVWLPVTFEAVYLCPPYANAYFQLGFFTATTVHYLLLSFGSVTTSFLFIPFACFLIAGLYSLRVLKKQEEFKSAILDRRAIFITRDNLYVTINFSVIPSFIGMELCVVAVMTVGFAVFMTAAGVYTDVVKVLKTYLLMFQFGTFCVGGMGYPSRKATFVYCMTACILMPLVFVLQDLTIKSVLFLAIFFLFINGVTCETTIMLAKLKKGINGPKIVLSVCLLVNICITLSLNVLYKVYIETLKK.

11 consecutive transmembrane segments (helical) span residues 12–32 (TMAA…CFLF), 45–65 (VDEL…FFCF), 75–95 (YLDL…ICLQ), 103–123 (YLPI…PVTF), 132–152 (YANA…YLLL), 154–174 (FGSV…IAGL), 220–240 (LCVV…AGVY), 246–266 (VLKT…GMGY), 271–289 (ATFV…VFVL), 296–318 (SVLF…TIML), and 330–350 (IVLS…NVLY).

It belongs to the herpesviridae BMRF2 family.

The protein resides in the host membrane. The sequence is that of Gene 58 protein (58) from Equine herpesvirus 2 (strain 86/87) (EHV-2).